The chain runs to 41 residues: Large ribosomal subunit protein bL36 (41 aa).

Belongs to the bacterial ribosomal protein bL36 family.

The polypeptide is Large ribosomal subunit protein bL36 (Hydrogenovibrio crunogenus (strain DSM 25203 / XCL-2) (Thiomicrospira crunogena)).